The following is a 188-amino-acid chain: MTKLENPVLMATIGGAQGLRGEVRAKAYTADPTALGDYGLLHSTDGRSFEILEIREMKNVVVVRFRGINDRNAAEALNGLELYIERDNLPDEELEDDEFYYADLEGLEALDDKGVSYGTVTGVFDFGAGDLLELKGPGKRPVLIPFSEASVLEIDLEAGTLLIDPLAAGLVDDPELSQFTAGKPKKKK.

Residues 96–169 enclose the PRC barrel domain; it reads DDEFYYADLE…TLLIDPLAAG (74 aa).

It belongs to the RimM family. Binds ribosomal protein uS19.

The protein localises to the cytoplasm. Its function is as follows. An accessory protein needed during the final step in the assembly of 30S ribosomal subunit, possibly for assembly of the head region. Essential for efficient processing of 16S rRNA. May be needed both before and after RbfA during the maturation of 16S rRNA. It has affinity for free ribosomal 30S subunits but not for 70S ribosomes. The sequence is that of Ribosome maturation factor RimM from Rhizobium etli (strain ATCC 51251 / DSM 11541 / JCM 21823 / NBRC 15573 / CFN 42).